The following is a 354-amino-acid chain: Uroporphyrinogen decarboxylase (354 aa).

Residues 25 to 29, phenylalanine 44, aspartate 75, tyrosine 152, threonine 207, and histidine 330 each bind substrate; that span reads RQAGR.

Belongs to the uroporphyrinogen decarboxylase family. Homodimer.

Its subcellular location is the cytoplasm. It catalyses the reaction uroporphyrinogen III + 4 H(+) = coproporphyrinogen III + 4 CO2. It participates in porphyrin-containing compound metabolism; protoporphyrin-IX biosynthesis; coproporphyrinogen-III from 5-aminolevulinate: step 4/4. Catalyzes the decarboxylation of four acetate groups of uroporphyrinogen-III to yield coproporphyrinogen-III. This Xanthomonas axonopodis pv. citri (strain 306) protein is Uroporphyrinogen decarboxylase.